The chain runs to 291 residues: 33 kDa chaperonin (291 aa).

Intrachain disulfides connect C237–C239 and C270–C273.

This sequence belongs to the HSP33 family. Under oxidizing conditions two disulfide bonds are formed involving the reactive cysteines. Under reducing conditions zinc is bound to the reactive cysteines and the protein is inactive.

The protein resides in the cytoplasm. Its function is as follows. Redox regulated molecular chaperone. Protects both thermally unfolding and oxidatively damaged proteins from irreversible aggregation. Plays an important role in the bacterial defense system toward oxidative stress. This Bacillus cereus (strain G9842) protein is 33 kDa chaperonin.